Here is a 298-residue protein sequence, read N- to C-terminus: N-acetylmuramic acid 6-phosphate etherase (298 aa).

One can recognise an SIS domain in the interval 55–218; that stretch reads IHAQVSGGGR…STGLMIKSGK (164 aa). The active-site Proton donor is the Glu83. The active site involves Glu114.

This sequence belongs to the GCKR-like family. MurNAc-6-P etherase subfamily. As to quaternary structure, homodimer.

It catalyses the reaction N-acetyl-D-muramate 6-phosphate + H2O = N-acetyl-D-glucosamine 6-phosphate + (R)-lactate. Its pathway is amino-sugar metabolism; 1,6-anhydro-N-acetylmuramate degradation. It functions in the pathway amino-sugar metabolism; N-acetylmuramate degradation. The protein operates within cell wall biogenesis; peptidoglycan recycling. Specifically catalyzes the cleavage of the D-lactyl ether substituent of MurNAc 6-phosphate, producing GlcNAc 6-phosphate and D-lactate. Together with AnmK, is also required for the utilization of anhydro-N-acetylmuramic acid (anhMurNAc) either imported from the medium or derived from its own cell wall murein, and thus plays a role in cell wall recycling. The protein is N-acetylmuramic acid 6-phosphate etherase of Escherichia coli O7:K1 (strain IAI39 / ExPEC).